Here is a 157-residue protein sequence, read N- to C-terminus: Probable succinate transporter subunit YjjB (157 aa).

4 helical membrane-spanning segments follow: residues 8-28 (LALA…AMVF), 50-70 (MILM…SMLV), 87-107 (VFTV…TAMI), and 129-149 (FLTA…PGLW).

This sequence belongs to the ThrE exporter (TC 2.A.79) family. The transporter is composed of YjjB and YjjP.

It is found in the cell inner membrane. In terms of biological role, involved in succinate export with YjjP. Both proteins are required for export. The polypeptide is Probable succinate transporter subunit YjjB (Escherichia coli O1:K1 / APEC).